A 198-amino-acid chain; its full sequence is Probable host range protein 2-3 (198 aa).

The interval 153–198 (GENGYEDSTEEEDNEEDTDGVCLYCLEEEEEEDEDEDEDEDEDEEE) is disordered. Acidic residues-rich tracts occupy residues 156–171 (GYED…EDTD) and 178–198 (LEEE…DEEE).

Belongs to the poxviridae C7 protein family.

Plays a role for multiplication of the virus in different cell types. The protein is Probable host range protein 2-3 of Rabbit fibroma virus (strain Kasza) (RFV).